Consider the following 178-residue polypeptide: Disulfide bond formation protein B (178 aa).

Topologically, residues 1–16 (MTIFSSLNQFSKGHVS) are cytoplasmic. Residues 17 to 33 (WLLLLLFIIFFEACALY) form a helical membrane-spanning segment. At 34–51 (FQHVMMLAPCVMCIYERV) the chain is on the periplasmic side. The cysteines at positions 43 and 46 are disulfide-linked. The helical transmembrane segment at 52–67 (AMMGIGGAAIIGLIAP) threads the bilayer. Residues 68-74 (NNALFRW) lie on the Cytoplasmic side of the membrane. A helical membrane pass occupies residues 75 to 92 (LGLIGWGLSSYKGLMLAM). Residues 93–147 (QHVDYQFNPSPFATCDLFVTFPSWAPLNQWVPWMFEAYGDCSKIVWQFFDLSMPQ) are Periplasmic-facing. A disulfide bond links Cys107 and Cys133. Residues 148–166 (WLVVIFAGNLVALALIVIA) traverse the membrane as a helical segment. Residues 167 to 178 (QFFPVKRKNPIR) are Cytoplasmic-facing.

Belongs to the DsbB family.

Its subcellular location is the cell inner membrane. Functionally, required for disulfide bond formation in some periplasmic proteins. Acts by oxidizing the DsbA protein. The protein is Disulfide bond formation protein B of Vibrio parahaemolyticus serotype O3:K6 (strain RIMD 2210633).